A 292-amino-acid polypeptide reads, in one-letter code: Small ribosomal subunit protein uS2 (292 aa).

The disordered stretch occupies residues 265 to 292 (TETALDWSDEPVAGDWAAEPAADAQGGW). The segment covering 277 to 292 (AGDWAAEPAADAQGGW) has biased composition (low complexity).

The protein belongs to the universal ribosomal protein uS2 family. Component of the small ribosomal subunit. Mature ribosomes consist of a small (40S) and a large (60S) subunit. The 40S subunit contains about 33 different proteins and 1 molecule of RNA (18S). The 60S subunit contains about 49 different proteins and 3 molecules of RNA (25S, 5.8S and 5S). Interacts with RPS21.

The protein localises to the cytoplasm. Required for the assembly and/or stability of the 40S ribosomal subunit. Required for the processing of the 20S rRNA-precursor to mature 18S rRNA in a late step of the maturation of 40S ribosomal subunits. The polypeptide is Small ribosomal subunit protein uS2 (Cryptococcus neoformans var. neoformans serotype D (strain B-3501A) (Filobasidiella neoformans)).